The following is a 159-amino-acid chain: SsrA-binding protein (159 aa).

The disordered stretch occupies residues 134 to 159 (KLHDKRETSKERDWNRQKNRLLKERG). A compositionally biased stretch (basic and acidic residues) spans 137–159 (DKRETSKERDWNRQKNRLLKERG).

The protein belongs to the SmpB family.

The protein localises to the cytoplasm. Functionally, required for rescue of stalled ribosomes mediated by trans-translation. Binds to transfer-messenger RNA (tmRNA), required for stable association of tmRNA with ribosomes. tmRNA and SmpB together mimic tRNA shape, replacing the anticodon stem-loop with SmpB. tmRNA is encoded by the ssrA gene; the 2 termini fold to resemble tRNA(Ala) and it encodes a 'tag peptide', a short internal open reading frame. During trans-translation Ala-aminoacylated tmRNA acts like a tRNA, entering the A-site of stalled ribosomes, displacing the stalled mRNA. The ribosome then switches to translate the ORF on the tmRNA; the nascent peptide is terminated with the 'tag peptide' encoded by the tmRNA and targeted for degradation. The ribosome is freed to recommence translation, which seems to be the essential function of trans-translation. This chain is SsrA-binding protein, found in Rhizobium meliloti (strain 1021) (Ensifer meliloti).